A 144-amino-acid chain; its full sequence is Small ribosomal subunit protein uS11c (144 aa).

The protein belongs to the universal ribosomal protein uS11 family. Part of the 30S ribosomal subunit.

Its subcellular location is the plastid. It is found in the chloroplast. In Oenothera biennis (German evening primrose), this protein is Small ribosomal subunit protein uS11c.